The chain runs to 433 residues: Serine/threonine-protein kinase STK11 (433 aa).

Phosphoserine is present on serine 31. N6-acetyllysine is present on residues lysine 44 and lysine 48. Positions 45 to 90 are sufficient for interaction with SIRT1; that stretch reads LIGKYLMGDLLGEGSYGKVKEVLDSETLCRRAVKILKKKKLRRIPN. The 261-residue stretch at 49-309 folds into the Protein kinase domain; it reads YLMGDLLGEG…IRQIRQHSWF (261 aa). ATP is bound by residues 55–63 and lysine 78; that span reads LGEGSYGKV. An N6-acetyllysine mark is found at lysine 96 and lysine 97. Aspartate 176 (proton acceptor) is an active-site residue. Threonine 189 carries the post-translational modification Phosphothreonine; by autocatalysis. Residues lysine 296 and lysine 311 each carry the N6-acetyllysine modification. Positions 312 to 331 are disordered; sequence KHPPAEAPVPIPPSPDTKDR. Pro residues predominate over residues 316–326; that stretch reads AEAPVPIPPSP. Phosphoserine is present on serine 325. Threonine 336 is modified (phosphothreonine; by autocatalysis). Threonine 363 carries the post-translational modification Phosphothreonine; by ATM and autocatalysis. A disordered region spans residues 397–433; the sequence is AAQLSTKSRAEGRAPNPARKACSASSKIRRLSACKQQ. 2 positions are modified to phosphoserine: glutamine 399 and serine 401. Lysine 416 is modified (N6-acetyllysine). Cysteine 418 carries S-palmitoyl cysteine lipidation. Lysine 423 bears the N6-acetyllysine mark. Residues 423-433 show a composition bias toward basic residues; it reads KIRRLSACKQQ. Serine 428 carries the phosphoserine; by autocatalysis, PKA, PKC/PRKCZ and RPS6KA1 modification. Cysteine 430 carries the post-translational modification Cysteine methyl ester. Residue cysteine 430 is the site of S-farnesyl cysteine attachment. Lysine 431 is modified (N6-acetyllysine). A propeptide spans 431 to 433 (removed in mature form); that stretch reads KQQ.

The protein belongs to the protein kinase superfamily. CAMK Ser/Thr protein kinase family. LKB1 subfamily. As to quaternary structure, catalytic component of a trimeric complex composed of STK11/LKB1, STRAD (STRADA or STRADB) and CAB39/MO25 (CAB39/MO25alpha or CAB39L/MO25beta): the complex tethers STK11/LKB1 in the cytoplasm and stimulates its catalytic activity. Found in a ternary complex composed of SMAD4, STK11/LKB1 and STK11IP. Interacts with p53/TP53, SMAD4, STK11IP and WDR6. Interacts with NR4A1. Interacts with NISCH; this interaction may increase STK11 activity. Interacts with PTEN; leading to PTEN phosphorylation. Interacts with SIRT1; the interaction deacetylates STK11. Interacts with CDKN1A. Mg(2+) serves as cofactor. Mn(2+) is required as a cofactor. Phosphorylated by ATM at Thr-363 following ionizing radiation (IR). Phosphorylation at Ser-428 by RPS6KA1 and/or some PKA is required to inhibit cell growth. Phosphorylation at Ser-428 is also required during neuronal polarization to mediate phosphorylation of BRSK1 and BRSK2. Phosphorylation by PKC/PRKCZ at Ser-399 in isoform 2 promotes metformin (or peroxynitrite)-induced nuclear export of STK11 and activation of AMPK. UV radiation-induced phosphorylation at Thr-363 mediates CDKN1A degradation. Post-translationally, acetylated. Deacetylation at Lys-48 enhances cytoplasmic localization and kinase activity in vitro. In terms of tissue distribution, ubiquitously expressed. Strongest expression in testis and fetal liver.

The protein localises to the nucleus. The protein resides in the cytoplasm. It localises to the membrane. It is found in the mitochondrion. The catalysed reaction is L-seryl-[protein] + ATP = O-phospho-L-seryl-[protein] + ADP + H(+). It carries out the reaction L-threonyl-[protein] + ATP = O-phospho-L-threonyl-[protein] + ADP + H(+). Its activity is regulated as follows. Activated by forming a complex with STRAD (STRADA or STRADB) and CAB39/MO25 (CAB39/MO25alpha or CAB39L/MO25beta): STRADA (or STRADB)-binding promotes a conformational change of STK11/LKB1 in an active conformation, which is stabilized by CAB39/MO25alpha (or CAB39L/MO25beta) interacting with the STK11/LKB1 activation loop. Sequestration in the nucleus by NR4A1 prevents it from phosphorylating and activating cytoplasmic AMPK. Functionally, tumor suppressor serine/threonine-protein kinase that controls the activity of AMP-activated protein kinase (AMPK) family members, thereby playing a role in various processes such as cell metabolism, cell polarity, apoptosis and DNA damage response. Acts by phosphorylating the T-loop of AMPK family proteins, thus promoting their activity: phosphorylates PRKAA1, PRKAA2, BRSK1, BRSK2, MARK1, MARK2, MARK3, MARK4, NUAK1, NUAK2, SIK1, SIK2, SIK3 and SNRK but not MELK. Also phosphorylates non-AMPK family proteins such as STRADA, PTEN and possibly p53/TP53. Acts as a key upstream regulator of AMPK by mediating phosphorylation and activation of AMPK catalytic subunits PRKAA1 and PRKAA2 and thereby regulates processes including: inhibition of signaling pathways that promote cell growth and proliferation when energy levels are low, glucose homeostasis in liver, activation of autophagy when cells undergo nutrient deprivation, and B-cell differentiation in the germinal center in response to DNA damage. Also acts as a regulator of cellular polarity by remodeling the actin cytoskeleton. Required for cortical neuron polarization by mediating phosphorylation and activation of BRSK1 and BRSK2, leading to axon initiation and specification. Involved in DNA damage response: interacts with p53/TP53 and recruited to the CDKN1A/WAF1 promoter to participate in transcription activation. Able to phosphorylate p53/TP53; the relevance of such result in vivo is however unclear and phosphorylation may be indirect and mediated by downstream STK11/LKB1 kinase NUAK1. Also acts as a mediator of p53/TP53-dependent apoptosis via interaction with p53/TP53: translocates to the mitochondrion during apoptosis and regulates p53/TP53-dependent apoptosis pathways. Regulates UV radiation-induced DNA damage response mediated by CDKN1A. In association with NUAK1, phosphorylates CDKN1A in response to UV radiation and contributes to its degradation which is necessary for optimal DNA repair. Its function is as follows. Has a role in spermiogenesis. The sequence is that of Serine/threonine-protein kinase STK11 from Homo sapiens (Human).